The sequence spans 249 residues: 4-hydroxy-tetrahydrodipicolinate reductase (249 aa).

Residues Asp32, 74–76, and 99–102 contribute to the NAD(+) site; these read GTT and SANY. The active-site Proton donor/acceptor is the His134. Residue His135 participates in (S)-2,3,4,5-tetrahydrodipicolinate binding. Lys138 serves as the catalytic Proton donor. 144–145 provides a ligand contact to (S)-2,3,4,5-tetrahydrodipicolinate; sequence GT.

The protein belongs to the DapB family.

Its subcellular location is the cytoplasm. The catalysed reaction is (S)-2,3,4,5-tetrahydrodipicolinate + NAD(+) + H2O = (2S,4S)-4-hydroxy-2,3,4,5-tetrahydrodipicolinate + NADH + H(+). It carries out the reaction (S)-2,3,4,5-tetrahydrodipicolinate + NADP(+) + H2O = (2S,4S)-4-hydroxy-2,3,4,5-tetrahydrodipicolinate + NADPH + H(+). It functions in the pathway amino-acid biosynthesis; L-lysine biosynthesis via DAP pathway; (S)-tetrahydrodipicolinate from L-aspartate: step 4/4. In terms of biological role, catalyzes the conversion of 4-hydroxy-tetrahydrodipicolinate (HTPA) to tetrahydrodipicolinate. This Chlorobaculum tepidum (strain ATCC 49652 / DSM 12025 / NBRC 103806 / TLS) (Chlorobium tepidum) protein is 4-hydroxy-tetrahydrodipicolinate reductase.